The following is a 511-amino-acid chain: Bifunctional purine biosynthesis protein PurH (511 aa).

The MGS-like domain occupies 1–145 (MKKRALVSVS…KNHKFVSVIV (145 aa)).

Belongs to the PurH family.

It catalyses the reaction (6R)-10-formyltetrahydrofolate + 5-amino-1-(5-phospho-beta-D-ribosyl)imidazole-4-carboxamide = 5-formamido-1-(5-phospho-D-ribosyl)imidazole-4-carboxamide + (6S)-5,6,7,8-tetrahydrofolate. The enzyme catalyses IMP + H2O = 5-formamido-1-(5-phospho-D-ribosyl)imidazole-4-carboxamide. It functions in the pathway purine metabolism; IMP biosynthesis via de novo pathway; 5-formamido-1-(5-phospho-D-ribosyl)imidazole-4-carboxamide from 5-amino-1-(5-phospho-D-ribosyl)imidazole-4-carboxamide (10-formyl THF route): step 1/1. It participates in purine metabolism; IMP biosynthesis via de novo pathway; IMP from 5-formamido-1-(5-phospho-D-ribosyl)imidazole-4-carboxamide: step 1/1. The chain is Bifunctional purine biosynthesis protein PurH from Bacillus thuringiensis (strain Al Hakam).